The sequence spans 352 residues: Maleylacetate reductase (352 aa).

Belongs to the iron-containing alcohol dehydrogenase family.

The catalysed reaction is 3-oxoadipate + NAD(+) = maleylacetate + NADH + H(+). The enzyme catalyses 3-oxoadipate + NADP(+) = maleylacetate + NADPH + H(+). The protein operates within aromatic compound metabolism; 3-chlorocatechol degradation. This is Maleylacetate reductase (clcE) from Pseudomonas knackmussii (strain DSM 6978 / CCUG 54928 / LMG 23759 / B13).